Consider the following 167-residue polypeptide: Dimethylamine corrinoid protein 3 (167 aa).

The 44-residue stretch at 1–44 (MNEVGVRFERGKLFLPHVMMAADAMTAGVNALKDLMPEGSASSK) folds into the B12-binding N-terminal domain. Residues 45 to 167 (MGVIVNGTVE…AVTKAKELLA (123 aa)) form the B12-binding domain. Position 58 (His-58) interacts with methylcob(III)alamin.

Belongs to the methylamine corrinoid protein family.

The protein operates within one-carbon metabolism; methanogenesis from dimethylamine. Functionally, acts as a methyl group carrier between MtbB and MtbA. The chain is Dimethylamine corrinoid protein 3 (mtbC3) from Methanosarcina mazei (strain ATCC BAA-159 / DSM 3647 / Goe1 / Go1 / JCM 11833 / OCM 88) (Methanosarcina frisia).